Reading from the N-terminus, the 732-residue chain is Aldehyde oxidoreductase molybdenum-binding subunit PaoC (732 aa).

Mo-molybdopterin cytosine dinucleotide-binding positions include 241–242, 468–470, 511–512, 615–621, Q625, and 688–691; these read GF, IGT, GA, RILNPKT, and KGVG. The active-site Proton acceptor is E692.

The protein belongs to the xanthine dehydrogenase family. Heterotrimer composed of PaoA, PaoB and PaoC. Requires Mo-molybdopterin cytosine dinucleotide as cofactor.

The protein resides in the periplasm. The catalysed reaction is an aldehyde + A + H2O = a carboxylate + AH2 + H(+). Its function is as follows. Oxidizes aldehydes to the corresponding carboxylic acids with a preference for aromatic aldehydes. It might play a role in the detoxification of aldehydes to avoid cell damage. The chain is Aldehyde oxidoreductase molybdenum-binding subunit PaoC from Escherichia coli O157:H7.